Reading from the N-terminus, the 391-residue chain is ATP phosphoribosyltransferase regulatory subunit (391 aa).

Belongs to the class-II aminoacyl-tRNA synthetase family. HisZ subfamily. Heteromultimer composed of HisG and HisZ subunits.

The protein resides in the cytoplasm. The protein operates within amino-acid biosynthesis; L-histidine biosynthesis; L-histidine from 5-phospho-alpha-D-ribose 1-diphosphate: step 1/9. In terms of biological role, required for the first step of histidine biosynthesis. May allow the feedback regulation of ATP phosphoribosyltransferase activity by histidine. This is ATP phosphoribosyltransferase regulatory subunit from Clostridium kluyveri (strain ATCC 8527 / DSM 555 / NBRC 12016 / NCIMB 10680 / K1).